Here is a 796-residue protein sequence, read N- to C-terminus: Bud site selection protein 27 (796 aa).

Positions 81 to 121 (KEEAITFVDDKLKLMEDAIEQFNLKIEEAKKTLDNLNHMED) form a coiled coil. Polar residues predominate over residues 152-168 (VISSSVTPTTKQPSQSN). Disordered regions lie at residues 152-197 (VISS…EENL), 300-344 (LRAQ…QVGF), 421-458 (EGEA…TTRS), 535-624 (EKEP…AKTG), and 752-796 (ATAS…DSKP). Basic and acidic residues-rich tracts occupy residues 169–197 (SKKE…EENL) and 306–318 (SQDH…DVNK). Residues 427 to 441 (SNRRTRVSRFRKDRA) show a composition bias toward basic residues. A compositionally biased stretch (basic and acidic residues) spans 535 to 550 (EKEPEINSKSEFETPF). A compositionally biased stretch (basic residues) spans 551 to 568 (KKKKLKSLQKPRSSKSMK). A compositionally biased stretch (acidic residues) spans 579–589 (ISDDDYDDDDD). S580 carries the phosphoserine modification. Residues 601 to 610 (NNTDEQDKFP) show a composition bias toward basic and acidic residues.

It belongs to the prefoldin subunit alpha family.

Its subcellular location is the cytoplasm. Its function is as follows. Involved in gene expression controlled by TOR kinase and nutrient signaling. May also be involved in positioning the proximal bud pole signal. The polypeptide is Bud site selection protein 27 (BUD27) (Saccharomyces cerevisiae (strain ATCC 204508 / S288c) (Baker's yeast)).